The chain runs to 640 residues: Chaperone protein DnaK (640 aa).

A Phosphothreonine; by autocatalysis modification is found at T196. Disordered stretches follow at residues 510-530 (NDAK…ETKN) and 598-640 (AADA…DKDK).

The protein belongs to the heat shock protein 70 family.

Acts as a chaperone. The chain is Chaperone protein DnaK from Prosthecochloris aestuarii (strain DSM 271 / SK 413).